A 297-amino-acid chain; its full sequence is Mitochondrial citrate transporter A (297 aa).

3 Solcar repeats span residues 12-91, 102-188, and 199-286; these read PSSL…LKSL, PKTV…LKQM, and LGTA…TMDA. 6 consecutive transmembrane segments (helical) span residues 18 to 31, 61 to 81, 99 to 119, 160 to 180, 192 to 212, and 251 to 272; these read IIAG…EIAI, SQWY…AGIR, ISGP…SLLA, FFQG…TRFS, YVAP…GIAG, and KDEG…LIMS.

The protein belongs to the mitochondrial carrier (TC 2.A.29) family.

The protein localises to the mitochondrion inner membrane. The catalysed reaction is citrate(in) + H(+)(in) = citrate(out) + H(+)(out). Functionally, mitochondrial transporter that mediates citrate export from mitochondria to cytoplasm. Both ctpA, ctpB, and ctpD play important roles in citric acid transport across the mitochondrial membrane and function in a redundant manner. This is Mitochondrial citrate transporter A from Aspergillus niger (strain ATCC 1015 / CBS 113.46 / FGSC A1144 / LSHB Ac4 / NCTC 3858a / NRRL 328 / USDA 3528.7).